A 165-amino-acid polypeptide reads, in one-letter code: MRILGIDPGTMVVGYGVIEAADDELSLIGFSSLTPPASAPIPQRLAYIYKGLVEVIELYQPDEVAVESPFADKNIKSALAIGKAQAVALLAAANHSLSVTEYSPACIKSRVSGSGTASKEQIQEMVRLLLNLAEIPQPNDAADALAVAICHHSHRAFANITSQGD.

Active-site residues include Asp-7, Glu-67, and Asp-140. Residues Asp-7, Glu-67, and Asp-140 each contribute to the Mg(2+) site.

This sequence belongs to the RuvC family. Homodimer which binds Holliday junction (HJ) DNA. The HJ becomes 2-fold symmetrical on binding to RuvC with unstacked arms; it has a different conformation from HJ DNA in complex with RuvA. In the full resolvosome a probable DNA-RuvA(4)-RuvB(12)-RuvC(2) complex forms which resolves the HJ. Requires Mg(2+) as cofactor.

It is found in the cytoplasm. The enzyme catalyses Endonucleolytic cleavage at a junction such as a reciprocal single-stranded crossover between two homologous DNA duplexes (Holliday junction).. Its function is as follows. The RuvA-RuvB-RuvC complex processes Holliday junction (HJ) DNA during genetic recombination and DNA repair. Endonuclease that resolves HJ intermediates. Cleaves cruciform DNA by making single-stranded nicks across the HJ at symmetrical positions within the homologous arms, yielding a 5'-phosphate and a 3'-hydroxyl group; requires a central core of homology in the junction. The consensus cleavage sequence is 5'-(A/T)TT(C/G)-3'. Cleavage occurs on the 3'-side of the TT dinucleotide at the point of strand exchange. HJ branch migration catalyzed by RuvA-RuvB allows RuvC to scan DNA until it finds its consensus sequence, where it cleaves and resolves the cruciform DNA. The chain is Crossover junction endodeoxyribonuclease RuvC from Dehalococcoides mccartyi (strain ATCC BAA-2266 / KCTC 15142 / 195) (Dehalococcoides ethenogenes (strain 195)).